The chain runs to 122 residues: Large ribosomal subunit protein uL18 (122 aa).

Belongs to the universal ribosomal protein uL18 family. In terms of assembly, part of the 50S ribosomal subunit; part of the 5S rRNA/L5/L18/L25 subcomplex. Contacts the 5S and 23S rRNAs.

In terms of biological role, this is one of the proteins that bind and probably mediate the attachment of the 5S RNA into the large ribosomal subunit, where it forms part of the central protuberance. This chain is Large ribosomal subunit protein uL18, found in Thermosipho africanus (strain TCF52B).